We begin with the raw amino-acid sequence, 264 residues long: 3-methyl-2-oxobutanoate hydroxymethyltransferase (264 aa).

Mg(2+) contacts are provided by aspartate 45 and aspartate 84. 3-methyl-2-oxobutanoate is bound by residues 45-46 (DS), aspartate 84, and lysine 113. Residue glutamate 115 participates in Mg(2+) binding. Glutamate 182 functions as the Proton acceptor in the catalytic mechanism.

Belongs to the PanB family. As to quaternary structure, homodecamer; pentamer of dimers. Requires Mg(2+) as cofactor.

The protein resides in the cytoplasm. It carries out the reaction 3-methyl-2-oxobutanoate + (6R)-5,10-methylene-5,6,7,8-tetrahydrofolate + H2O = 2-dehydropantoate + (6S)-5,6,7,8-tetrahydrofolate. Its pathway is cofactor biosynthesis; (R)-pantothenate biosynthesis; (R)-pantoate from 3-methyl-2-oxobutanoate: step 1/2. Catalyzes the reversible reaction in which hydroxymethyl group from 5,10-methylenetetrahydrofolate is transferred onto alpha-ketoisovalerate to form ketopantoate. In Nitrosococcus oceani (strain ATCC 19707 / BCRC 17464 / JCM 30415 / NCIMB 11848 / C-107), this protein is 3-methyl-2-oxobutanoate hydroxymethyltransferase.